An 81-amino-acid chain; its full sequence is Consomatin Le1 (81 aa).

Positions 1–22 are cleaved as a signal peptide; it reads MQTAYWVMVMMMVWITAPLSEG. Residues 23-57 constitute a propeptide that is removed on maturation; that stretch reads GKPNDVIRGLVPDDLTPQLILRSLISRRRSDKDVR. Glutamate 58 carries the 4-carboxyglutamate modification. Cysteine 62 and cysteine 67 are disulfide-bonded. Position 64 is a D-tryptophan (tryptophan 64). Residue proline 69 is modified to 4-hydroxyproline. Positions 71-81 are excised as a propeptide; the sequence is LWRRHDLKGKD.

Belongs to the conotoxin C superfamily. Consomatin family. In terms of tissue distribution, expressed by the venom duct.

It is found in the secreted. Its function is as follows. Moderately activates human somatostatin receptors (SSTR) with a preferential activation of SSTR1 and SSTR4. In vivo, does not cause behavioral changes in mice within a few minutes of intracranial injection, but causes a progressive loss of movement thereafter. Four to five hours after injection, mice recover, even with the highest dose tested. Shows antinociception and antihyperalgesia activities in two mouse models of acute pain, most probably by acting outside the central nervous system. This Conus lenavati (Cone snail) protein is Consomatin Le1.